The chain runs to 161 residues: MQDAITSVINAADVQGKYLDDSSVEKLRGYFQTGELRVRAAATIAANAATIIKESVAKSLLYSDITRPGGNMYTTRRYAACIRDLDYYLRYATYGMLAGDPSILEERVLNGLKETYNSLGVPIGATIQAILAMKEVTISLVGPDAGKEMGLYFDYICSGLG.

Asn-71 carries the post-translational modification N4-methylasparagine. Cys-81 is a (2R,3E)-phycocyanobilin binding site.

Belongs to the phycobiliprotein family. Heterodimer of an alpha and a beta chain. In terms of processing, contains one covalently linked phycocyanobilin chromophore.

The protein localises to the plastid. The protein resides in the chloroplast thylakoid membrane. Light-harvesting photosynthetic bile pigment-protein from the phycobiliprotein complex. Allophycocyanin has a maximum absorption at approximately 650 nanometers. The sequence is that of Allophycocyanin beta chain (apcB) from Pyropia haitanensis (Red seaweed).